The primary structure comprises 279 residues: Large ribosomal subunit protein uL2 (279 aa).

Basic residues-rich tracts occupy residues 211-221 (GRSRWRGKTPH) and 256-279 (SYGK…RKGK). Residues 211–279 (GRSRWRGKTP…KFIVRGRKGK (69 aa)) are disordered.

Belongs to the universal ribosomal protein uL2 family. In terms of assembly, part of the 50S ribosomal subunit. Forms a bridge to the 30S subunit in the 70S ribosome.

In terms of biological role, one of the primary rRNA binding proteins. Required for association of the 30S and 50S subunits to form the 70S ribosome, for tRNA binding and peptide bond formation. It has been suggested to have peptidyltransferase activity; this is somewhat controversial. Makes several contacts with the 16S rRNA in the 70S ribosome. This is Large ribosomal subunit protein uL2 from Oenococcus oeni (strain ATCC BAA-331 / PSU-1).